The chain runs to 138 residues: Beta-galactosidase (138 aa).

Belongs to the glycosyl hydrolase 2 family.

It carries out the reaction Hydrolysis of terminal non-reducing beta-D-galactose residues in beta-D-galactosides.. The sequence is that of Beta-galactosidase (lacZ) from Rhizobium radiobacter (Agrobacterium tumefaciens).